We begin with the raw amino-acid sequence, 199 residues long: Protein C (199 aa).

2 stretches are compositionally biased toward polar residues: residues 19–34 and 43–57; these read QLIS…SYSA and KTTQ…SAPP. Positions 19–67 are disordered; that stretch reads QLISPRPSTSLNSYSAPTPKKTYRKTTQSTQEPSNSAPPSVNQKSNQQK. The span at 58–67 shows a compositional bias: low complexity; it reads SVNQKSNQQK.

Belongs to the respirovirus protein C family.

The chain is Protein C (P/V/C) from Human parainfluenza 3 virus (strain Wash/47885/57) (HPIV-3).